We begin with the raw amino-acid sequence, 384 residues long: Lipid-A-disaccharide synthase 1 (384 aa).

It belongs to the LpxB family.

It catalyses the reaction a lipid X + a UDP-2-N,3-O-bis[(3R)-3-hydroxyacyl]-alpha-D-glucosamine = a lipid A disaccharide + UDP + H(+). The protein operates within bacterial outer membrane biogenesis; LPS lipid A biosynthesis. Condensation of UDP-2,3-diacylglucosamine and 2,3-diacylglucosamine-1-phosphate to form lipid A disaccharide, a precursor of lipid A, a phosphorylated glycolipid that anchors the lipopolysaccharide to the outer membrane of the cell. The protein is Lipid-A-disaccharide synthase 1 of Legionella pneumophila subsp. pneumophila (strain Philadelphia 1 / ATCC 33152 / DSM 7513).